A 213-amino-acid chain; its full sequence is Orotidine 5'-phosphate decarboxylase (213 aa).

Substrate-binding positions include Asp-9, Lys-31, 59 to 68, Ser-115, 166 to 176, Gly-191, and Arg-192; these read DFKVADIPAT and PGVGAQGGKIE. Lys-61 acts as the Proton donor in catalysis.

It belongs to the OMP decarboxylase family. Type 1 subfamily. In terms of assembly, homodimer.

It carries out the reaction orotidine 5'-phosphate + H(+) = UMP + CO2. It participates in pyrimidine metabolism; UMP biosynthesis via de novo pathway; UMP from orotate: step 2/2. In terms of biological role, catalyzes the decarboxylation of orotidine 5'-monophosphate (OMP) to uridine 5'-monophosphate (UMP). The sequence is that of Orotidine 5'-phosphate decarboxylase from Methanocaldococcus jannaschii (strain ATCC 43067 / DSM 2661 / JAL-1 / JCM 10045 / NBRC 100440) (Methanococcus jannaschii).